The chain runs to 603 residues: UvrABC system protein C (603 aa).

Positions 15–92 (DQPGCYLMKN…IQKHQPYYNI (78 aa)) constitute a GIY-YIG domain. Residues 197–232 (AQVKKQLTARMERAAGQLEFERAAEIRDQLHYIEVT) form the UVR domain.

This sequence belongs to the UvrC family. As to quaternary structure, interacts with UvrB in an incision complex.

It is found in the cytoplasm. Its function is as follows. The UvrABC repair system catalyzes the recognition and processing of DNA lesions. UvrC both incises the 5' and 3' sides of the lesion. The N-terminal half is responsible for the 3' incision and the C-terminal half is responsible for the 5' incision. The chain is UvrABC system protein C from Limosilactobacillus fermentum (strain NBRC 3956 / LMG 18251) (Lactobacillus fermentum).